The sequence spans 604 residues: MKLALLILLLLNPHLSSSKNTPASGQPQEDLVEQKCLLKNYTHHSCDKVFCQPWQKCIEGTCACKLPYQCPKAGTPVCATNGRGYPTYCHLKSFECLHPEIKFSNNGTCTAEEKFNVSLIYGSTDTEGIVQVKLVDQDEKMFICKNSWSTVEANVACFDLGFPLGVRDIQGRFNIPVNHKINSTECLHVRCQGVETSLAECTFTKKSSKAPHGLAGVVCYTQDADFPTSQSFQCVNGKRIPQEKACDGVNDCGDQSDELCCKGCRGQAFLCKSGVCIPNQRKCNGEVDCITGEDESGCEEDKKNKIHKGLARSDQGGETEIETEETEMLTPDMDTERKRIKSLLPKLSCGVKRNTHIRRKRVVGGKPAEMGDYPWQVAIKDGDRITCGGIYIGGCWILTAAHCVRPSRYRNYQVWTSLLDWLKPNSQLAVQGVSRVVVHEKYNGATYQNDIALVEMKKHPGKKECELINSVPACVPWSPYLFQPNDRCIISGWGREKDNQKVYSLRWGEVDLIGNCSRFYPGRYYEKEMQCAGTSDGSIDACKGDSGGPLVCKDVNNVTYVWGIVSWGENCGKPEFPGVYTRVASYFDWISYYVGRPLVSQYNV.

A signal peptide spans 1–18 (MKLALLILLLLNPHLSSS). 20 cysteine pairs are disulfide-bonded: C36–C260, C46–C57, C51–C62, C64–C96, C70–C89, C78–C109, C144–C186, C157–C219, C191–C201, C234–C252, C246–C261, C264–C276, C271–C289, C283–C298, C349–C474, C387–C403, C395–C465, C488–C552, C516–C531, and C542–C571. The N-linked (GlcNAc...) asparagine glycan is linked to N40. Positions 58–111 (IEGTCACKLPYQCPKAGTPVCATNGRGYPTYCHLKSFECLHPEIKFSNNGTCTA) constitute a Kazal-like domain. N-linked (GlcNAc...) asparagine glycans are attached at residues N106, N116, and N182. One can recognise an SRCR domain in the interval 117–217 (VSLIYGSTDT…SKAPHGLAGV (101 aa)). 2 consecutive LDL-receptor class A domains span residues 218–262 (VCYT…LCCK) and 263–299 (GCRGQAFLCKSGVCIPNQRKCNGEVDCITGEDESGCE). Ca(2+) contacts are provided by K244, D247, V249, D251, D257, and E258. Ca(2+)-binding residues include N284, E286, D288, D294, and E295. The 234-residue stretch at 362–595 (VVGGKPAEMG…YFDWISYYVG (234 aa)) folds into the Peptidase S1 domain. Active-site charge relay system residues include H402 and D450. An N-linked (GlcNAc...) asparagine glycan is attached at N515. The active-site Charge relay system is S546. The N-linked (GlcNAc...) asparagine glycan is linked to N557.

This sequence belongs to the peptidase S1 family. In terms of assembly, heterodimer of a light and heavy chains; disulfide-linked. The fully processed and mature protein circulates as a zymogen, and is allosterically activated by substrate-induced remodeling of the active site. Interacts with C3b. Interacts with complement factor H. Expressed in the liver by hepatocytes. Also present in other cells such as monocytes, fibroblasts or keratinocytes.

It is found in the secreted. The protein localises to the extracellular space. The catalysed reaction is Inactivates complement subcomponents C3b, iC3b and C4b by proteolytic cleavage.. Its function is as follows. Trypsin-like serine protease that plays an essential role in regulating the immune response by controlling all complement pathways. Inhibits these pathways by cleaving three peptide bonds in the alpha-chain of C3b and two bonds in the alpha-chain of C4b thereby inactivating these proteins. Essential cofactors for these reactions include factor H and C4BP in the fluid phase and membrane cofactor protein/CD46 and CR1 on cell surfaces. The presence of these cofactors on healthy cells allows degradation of deposited C3b by CFI in order to prevent undesired complement activation, while in apoptotic cells or microbes, the absence of such cofactors leads to C3b-mediated complement activation and subsequent opsonization. This is Complement factor I (Cfi) from Rattus norvegicus (Rat).